A 257-amino-acid chain; its full sequence is 5-oxoprolinase subunit A (257 aa).

The protein belongs to the LamB/PxpA family. As to quaternary structure, forms a complex composed of PxpA, PxpB and PxpC.

The enzyme catalyses 5-oxo-L-proline + ATP + 2 H2O = L-glutamate + ADP + phosphate + H(+). Catalyzes the cleavage of 5-oxoproline to form L-glutamate coupled to the hydrolysis of ATP to ADP and inorganic phosphate. This chain is 5-oxoprolinase subunit A, found in Pectobacterium atrosepticum (strain SCRI 1043 / ATCC BAA-672) (Erwinia carotovora subsp. atroseptica).